A 314-amino-acid polypeptide reads, in one-letter code: 4-hydroxy-3-methylbut-2-enyl diphosphate reductase (314 aa).

Cys-12 is a [4Fe-4S] cluster binding site. The (2E)-4-hydroxy-3-methylbut-2-enyl diphosphate site is built by His-41 and His-74. Residues His-41 and His-74 each coordinate dimethylallyl diphosphate. 2 residues coordinate isopentenyl diphosphate: His-41 and His-74. [4Fe-4S] cluster is bound at residue Cys-96. His-124 is a (2E)-4-hydroxy-3-methylbut-2-enyl diphosphate binding site. Dimethylallyl diphosphate is bound at residue His-124. His-124 contacts isopentenyl diphosphate. Glu-126 (proton donor) is an active-site residue. Thr-168 is a (2E)-4-hydroxy-3-methylbut-2-enyl diphosphate binding site. A [4Fe-4S] cluster-binding site is contributed by Cys-198. (2E)-4-hydroxy-3-methylbut-2-enyl diphosphate contacts are provided by Ser-226, Ser-227, Asn-228, and Ser-270. Dimethylallyl diphosphate is bound by residues Ser-226, Ser-227, Asn-228, and Ser-270. 4 residues coordinate isopentenyl diphosphate: Ser-226, Ser-227, Asn-228, and Ser-270.

This sequence belongs to the IspH family. It depends on [4Fe-4S] cluster as a cofactor.

The catalysed reaction is isopentenyl diphosphate + 2 oxidized [2Fe-2S]-[ferredoxin] + H2O = (2E)-4-hydroxy-3-methylbut-2-enyl diphosphate + 2 reduced [2Fe-2S]-[ferredoxin] + 2 H(+). It carries out the reaction dimethylallyl diphosphate + 2 oxidized [2Fe-2S]-[ferredoxin] + H2O = (2E)-4-hydroxy-3-methylbut-2-enyl diphosphate + 2 reduced [2Fe-2S]-[ferredoxin] + 2 H(+). It participates in isoprenoid biosynthesis; dimethylallyl diphosphate biosynthesis; dimethylallyl diphosphate from (2E)-4-hydroxy-3-methylbutenyl diphosphate: step 1/1. It functions in the pathway isoprenoid biosynthesis; isopentenyl diphosphate biosynthesis via DXP pathway; isopentenyl diphosphate from 1-deoxy-D-xylulose 5-phosphate: step 6/6. Its function is as follows. Catalyzes the conversion of 1-hydroxy-2-methyl-2-(E)-butenyl 4-diphosphate (HMBPP) into a mixture of isopentenyl diphosphate (IPP) and dimethylallyl diphosphate (DMAPP). Acts in the terminal step of the DOXP/MEP pathway for isoprenoid precursor biosynthesis. The chain is 4-hydroxy-3-methylbut-2-enyl diphosphate reductase from Pseudomonas aeruginosa (strain ATCC 15692 / DSM 22644 / CIP 104116 / JCM 14847 / LMG 12228 / 1C / PRS 101 / PAO1).